A 95-amino-acid chain; its full sequence is Small ribosomal subunit protein uS19 (95 aa).

Positions 75–95 (APTRSFRGHGGKKADKRGKMK) are disordered. Residues 80–95 (FRGHGGKKADKRGKMK) show a composition bias toward basic residues.

It belongs to the universal ribosomal protein uS19 family.

In terms of biological role, protein S19 forms a complex with S13 that binds strongly to the 16S ribosomal RNA. The protein is Small ribosomal subunit protein uS19 of Roseiflexus sp. (strain RS-1).